A 255-amino-acid chain; its full sequence is MSVDQELIETQKNWIPLEANPEVLTTFMQSLGVSKDWEFCDIYGIDEGLLEMVPSPCVAVILLFPITNEYEDKRYKLEKEIEEKGQVLSDKVYFMKQYIGNACGTIGVIHSVLNNANVIEFNENGFFKQFLDKTTSLSTEERAISLLKNSEIEKSHEISALQGQSNVPQEDEPVVLHFVSFVHVDGHLYELDGRKPFAINHGESSAETLLKDTANVLQKMIDEDPKEIRFNLMGLVKKPNEESEEEEEKEKEETK.

In terms of domain architecture, UCH catalytic spans 13–237; it reads NWIPLEANPE…IRFNLMGLVK (225 aa). Residues 16 to 21 are interaction with ubiquitin; sequence PLEANP. Cys103 (nucleophile) is an active-site residue. The Proton donor role is filled by His177. An interaction with ubiquitin region spans residues 227 to 232; that stretch reads EIRFNL. A disordered region spans residues 235–255; that stretch reads LVKKPNEESEEEEEKEKEETK. The span at 242-255 shows a compositional bias: acidic residues; it reads ESEEEEEKEKEETK.

Belongs to the peptidase C12 family.

The protein resides in the cytoplasm. The catalysed reaction is Thiol-dependent hydrolysis of ester, thioester, amide, peptide and isopeptide bonds formed by the C-terminal Gly of ubiquitin (a 76-residue protein attached to proteins as an intracellular targeting signal).. Its function is as follows. Ubiquitin-protein hydrolase is involved both in the processing of ubiquitin precursors and of ubiquitinated proteins. This enzyme is a thiol protease that recognizes and hydrolyzes a peptide bond at the C-terminal glycine of either ubiquitin or nedd8. The sequence is that of Probable ubiquitin carboxyl-terminal hydrolase (uch1) from Dictyostelium discoideum (Social amoeba).